Here is a 440-residue protein sequence, read N- to C-terminus: Xylose isomerase (440 aa).

Catalysis depends on residues H100 and D103. Positions 231, 267, 270, 295, 306, 308, and 338 each coordinate Mg(2+).

This sequence belongs to the xylose isomerase family. As to quaternary structure, homotetramer. The cofactor is Mg(2+).

It localises to the cytoplasm. It catalyses the reaction alpha-D-xylose = alpha-D-xylulofuranose. This Burkholderia multivorans (strain ATCC 17616 / 249) protein is Xylose isomerase.